Consider the following 459-residue polypeptide: Hemopexin (459 aa).

A signal peptide spans 1–23; that stretch reads MARALRVPVALWLLGLCWSLAKA. Disulfide bonds link C52/C232, C150/C155, and C189/C201. Hemopexin repeat units lie at residues 55–95, 96–140, 141–185, and 186–232; these read GWGF…WKDA, PSPV…FPGI, PFPL…SWPA, and VGNC…FMSC. H81 provides a ligand contact to heme. H151 contacts heme. Residue N188 is glycosylated (N-linked (GlcNAc...) asparagine). Residue N218 is glycosylated (N-linked (GlcNAc...) asparagine). H237 contacts heme. Residue N241 is glycosylated (N-linked (GlcNAc...) asparagine). Disulfide bonds link C250–C453, C359–C401, and C411–C428. 4 Hemopexin repeats span residues 252 to 297, 298 to 345, 350 to 389, and 393 to 444; these read PHLV…WPQG, PSTV…FGSP, LHSV…WTEL, and HTKV…LPQA. H286 is a heme binding site.

It belongs to the hemopexin family.

The protein resides in the secreted. Functionally, binds heme and transports it to the liver for breakdown and iron recovery, after which the free hemopexin returns to the circulation. The polypeptide is Hemopexin (HPX) (Bos taurus (Bovine)).